The sequence spans 510 residues: Olfactomedin-4 (510 aa).

The N-terminal stretch at 1–20 (MRPGLSFLLALLFFLGQAAG) is a signal peptide. Asn72 and Asn136 each carry an N-linked (GlcNAc...) asparagine glycan. Residues 155 to 234 (DFELIKVEVK…ECEASKDQNT (80 aa)) are a coiled coil. One can recognise an Olfactomedin-like domain in the interval 245–507 (SCGHGGVVNI…LLNYDLSVLQ (263 aa)). Cys246 and Cys437 form a disulfide bridge. A glycan (N-linked (GlcNAc...) asparagine) is linked at Asn253.

Homomultimer; disulfide-linked. Interacts with NDUFA13. Interacts with cell surface lectins (locutions ricinus communis agglutinin I, concanavalin-A and wheat germ agglutinin) and cadherin. N-glycosylated. In terms of tissue distribution, expressed during myeloid lineage development. Much higher expression in bone marrow neutrophils than in peripheral blood neutrophils (at protein level). Strongly expressed in the prostate, small intestine and colon and moderately expressed in the bone marrow and stomach. Overexpressed in some pancreatic cancer tissues.

The protein localises to the secreted. The protein resides in the extracellular space. Its subcellular location is the mitochondrion. May promote proliferation of pancreatic cancer cells by favoring the transition from the S to G2/M phase. In myeloid leukemic cell lines, inhibits cell growth and induces cell differentiation and apoptosis. May play a role in the inhibition of EIF4EBP1 phosphorylation/deactivation. Facilitates cell adhesion, most probably through interaction with cell surface lectins and cadherin. This is Olfactomedin-4 (OLFM4) from Homo sapiens (Human).